A 253-amino-acid polypeptide reads, in one-letter code: Ubiquinone biosynthesis O-methyltransferase (253 aa).

S-adenosyl-L-methionine-binding residues include arginine 41, glycine 72, aspartate 93, and leucine 136.

The protein belongs to the methyltransferase superfamily. UbiG/COQ3 family.

It catalyses the reaction a 3-demethylubiquinol + S-adenosyl-L-methionine = a ubiquinol + S-adenosyl-L-homocysteine + H(+). The catalysed reaction is a 3-(all-trans-polyprenyl)benzene-1,2-diol + S-adenosyl-L-methionine = a 2-methoxy-6-(all-trans-polyprenyl)phenol + S-adenosyl-L-homocysteine + H(+). The protein operates within cofactor biosynthesis; ubiquinone biosynthesis. Functionally, O-methyltransferase that catalyzes the 2 O-methylation steps in the ubiquinone biosynthetic pathway. The sequence is that of Ubiquinone biosynthesis O-methyltransferase from Azorhizobium caulinodans (strain ATCC 43989 / DSM 5975 / JCM 20966 / LMG 6465 / NBRC 14845 / NCIMB 13405 / ORS 571).